The following is a 389-amino-acid chain: Tryptophan synthase beta chain (389 aa).

N6-(pyridoxal phosphate)lysine is present on Lys84.

The protein belongs to the TrpB family. As to quaternary structure, tetramer of two alpha and two beta chains. Pyridoxal 5'-phosphate is required as a cofactor.

It catalyses the reaction (1S,2R)-1-C-(indol-3-yl)glycerol 3-phosphate + L-serine = D-glyceraldehyde 3-phosphate + L-tryptophan + H2O. Its pathway is amino-acid biosynthesis; L-tryptophan biosynthesis; L-tryptophan from chorismate: step 5/5. Its function is as follows. The beta subunit is responsible for the synthesis of L-tryptophan from indole and L-serine. This is Tryptophan synthase beta chain from Clostridium novyi (strain NT).